We begin with the raw amino-acid sequence, 413 residues long: Alpha-ketoglutarate-dependent xanthine dioxygenase xan1 (413 aa).

Positions 1–18 are enriched in low complexity; that stretch reads MSATATTTVVEPPTTTLT. The interval 1–24 is disordered; it reads MSATATTTVVEPPTTTLTGATEPP. 2 residues coordinate Fe cation: His183 and Asp185. Residues Thr228 and Trp362 each contribute to the 2-oxoglutarate site. Residue His377 participates in Fe cation binding. Arg389 provides a ligand contact to 2-oxoglutarate.

Belongs to the TfdA dioxygenase family. Requires Fe(2+) as cofactor.

The protein localises to the cytoplasm. It is found in the cytosol. The enzyme catalyses xanthine + 2-oxoglutarate + O2 = urate + succinate + CO2. Functionally, alpha-ketoglutarate-dependent xanthine dioxygenase is a non-heme mononuclear Fe(2+) enzyme that decarboxylates alpha-ketoglutarate to succinate and CO(2) while hydroxylating xanthine to generate uric acid. Allows xanthine utilization as a nitrogen source. This is Alpha-ketoglutarate-dependent xanthine dioxygenase xan1 (xan1) from Schizosaccharomyces pombe (strain 972 / ATCC 24843) (Fission yeast).